The sequence spans 273 residues: Shikimate dehydrogenase (NADP(+)) (273 aa).

Shikimate-binding positions include 15–17 (SKS) and Thr62. Catalysis depends on Lys66, which acts as the Proton acceptor. Asp78 contacts NADP(+). Asn87 and Asp103 together coordinate shikimate. NADP(+)-binding positions include 127–131 (GAGGA), 150–155 (NRTYAR), and Met214. Tyr216 serves as a coordination point for shikimate. NADP(+) is bound at residue Gly238.

This sequence belongs to the shikimate dehydrogenase family. As to quaternary structure, homodimer.

It carries out the reaction shikimate + NADP(+) = 3-dehydroshikimate + NADPH + H(+). It functions in the pathway metabolic intermediate biosynthesis; chorismate biosynthesis; chorismate from D-erythrose 4-phosphate and phosphoenolpyruvate: step 4/7. In terms of biological role, involved in the biosynthesis of the chorismate, which leads to the biosynthesis of aromatic amino acids. Catalyzes the reversible NADPH linked reduction of 3-dehydroshikimate (DHSA) to yield shikimate (SA). The sequence is that of Shikimate dehydrogenase (NADP(+)) from Yersinia enterocolitica serotype O:8 / biotype 1B (strain NCTC 13174 / 8081).